A 432-amino-acid polypeptide reads, in one-letter code: Gamma-glutamyl phosphate reductase (432 aa).

It belongs to the gamma-glutamyl phosphate reductase family.

The protein resides in the cytoplasm. It carries out the reaction L-glutamate 5-semialdehyde + phosphate + NADP(+) = L-glutamyl 5-phosphate + NADPH + H(+). It participates in amino-acid biosynthesis; L-proline biosynthesis; L-glutamate 5-semialdehyde from L-glutamate: step 2/2. Its function is as follows. Catalyzes the NADPH-dependent reduction of L-glutamate 5-phosphate into L-glutamate 5-semialdehyde and phosphate. The product spontaneously undergoes cyclization to form 1-pyrroline-5-carboxylate. The sequence is that of Gamma-glutamyl phosphate reductase from Psychrobacter sp. (strain PRwf-1).